Consider the following 81-residue polypeptide: Costars family protein ABRACL (81 aa).

This sequence belongs to the costars family.

This chain is Costars family protein ABRACL (abracl), found in Xenopus laevis (African clawed frog).